The sequence spans 85 residues: MSNNIEHTMQFDLSKNKEALTKTILTEVYNSLQEKGYNPINQLVGYLISGDPTYITNYNGARALVRKLERDDILEEVIKSYLEIK.

The protein belongs to the UPF0297 family.

The polypeptide is UPF0297 protein Cbei_1105 (Clostridium beijerinckii (strain ATCC 51743 / NCIMB 8052) (Clostridium acetobutylicum)).